The primary structure comprises 217 residues: Putative threonylcarbamoyl-AMP synthase (217 aa).

Residues 14 to 199 enclose the YrdC-like domain; it reads SRGIVSAVGA…TPRVLRPGPV (186 aa).

It belongs to the SUA5 family.

Its subcellular location is the cytoplasm. It catalyses the reaction L-threonine + hydrogencarbonate + ATP = L-threonylcarbamoyladenylate + diphosphate + H2O. Functionally, required for the formation of a threonylcarbamoyl group on adenosine at position 37 (t(6)A37) in tRNAs that read codons beginning with adenine. Catalyzes the conversion of L-threonine, HCO(3)(-)/CO(2) and ATP to give threonylcarbamoyl-AMP (TC-AMP) as the acyladenylate intermediate, with the release of diphosphate. In Mycobacterium tuberculosis (strain CDC 1551 / Oshkosh), this protein is Putative threonylcarbamoyl-AMP synthase.